Reading from the N-terminus, the 646-residue chain is Tyrosine-protein kinase MasK (646 aa).

The Periplasmic portion of the chain corresponds to 1-415 (MSPPQTTLPV…PTAGGRRWRT (415 aa)). One can recognise a Protein kinase domain in the interval 25 to 300 (YVLVRKLAEG…AFADALETFL (276 aa)). Residues 31–39 (LAEGGMAEI) and Lys-57 each bind ATP. The active-site Proton acceptor is Asp-163. The disordered stretch occupies residues 373–410 (TSAQRPGMSMRPSSPGVPAHGAASRGSTSPESAPTAGG). Residues 416-433 (LAVGLAGGLMLAAAGIVG) traverse the membrane as a helical segment. Topologically, residues 434 to 646 (YRQWMTTPAS…VMPFSWRVTQ (213 aa)) are cytoplasmic. A disordered region spans residues 521–547 (AGAASDVEAEADEEGADAAPVRSKKAS). The segment covering 527–536 (VEAEADEEGA) has biased composition (acidic residues).

It belongs to the protein kinase superfamily. Tyr protein kinase family. Interacts with MglA. In terms of processing, autophosphorylated.

The protein localises to the cell inner membrane. The catalysed reaction is L-tyrosyl-[protein] + ATP = O-phospho-L-tyrosyl-[protein] + ADP + H(+). Essential for growth. Interacts with MglA to control social gliding motility. This is Tyrosine-protein kinase MasK (masK) from Myxococcus xanthus (strain DK1622).